Consider the following 632-residue polypeptide: 1-deoxy-D-xylulose-5-phosphate synthase (632 aa).

Residues H72 and 113–115 (GHA) each bind thiamine diphosphate. D144 is a binding site for Mg(2+). Thiamine diphosphate is bound by residues 145–146 (GA), N174, Y285, and E368. N174 contacts Mg(2+).

It belongs to the transketolase family. DXPS subfamily. In terms of assembly, homodimer. Mg(2+) is required as a cofactor. The cofactor is thiamine diphosphate.

The enzyme catalyses D-glyceraldehyde 3-phosphate + pyruvate + H(+) = 1-deoxy-D-xylulose 5-phosphate + CO2. It functions in the pathway metabolic intermediate biosynthesis; 1-deoxy-D-xylulose 5-phosphate biosynthesis; 1-deoxy-D-xylulose 5-phosphate from D-glyceraldehyde 3-phosphate and pyruvate: step 1/1. In terms of biological role, catalyzes the acyloin condensation reaction between C atoms 2 and 3 of pyruvate and glyceraldehyde 3-phosphate to yield 1-deoxy-D-xylulose-5-phosphate (DXP). The polypeptide is 1-deoxy-D-xylulose-5-phosphate synthase (Cyanothece sp. (strain PCC 7425 / ATCC 29141)).